Consider the following 523-residue polypeptide: Polypyrimidine tract-binding protein 3 (523 aa).

Residues 1–25 (MNNSTSAGVYANGNDNKKFKGDRPP) form a disordered region. 3 RRM domains span residues 30–114 (RVLH…NLPN), 153–229 (LRII…FSKL), and 329–403 (SVLL…LSKH). K36 participates in a covalent cross-link: Glycyl lysine isopeptide (Lys-Gly) (interchain with G-Cter in SUMO2). The residue at position 98 (Y98) is a Phosphotyrosine. T109 is modified (phosphothreonine). K187 participates in a covalent cross-link: Glycyl lysine isopeptide (Lys-Gly) (interchain with G-Cter in SUMO2). Position 394 is an N6-acetyllysine (K394). The interval 406–426 (VQLPREGQEDQGLTKDFSNSP) is disordered. S425 bears the Phosphoserine mark. Residues 446 to 521 (ATLHLSNIPP…HHLRVSFSKS (76 aa)) form the RRM 4 domain.

In terms of assembly, interacts with THBS4 (via the acidic amphipathic C-terminus). As to expression, detected specifically in spleen, thymus, lungs, and bone marrow.

In terms of biological role, RNA-binding protein that mediates pre-mRNA alternative splicing regulation. Plays a role in the regulation of cell proliferation, differentiation and migration. Positive regulator of EPO-dependent erythropoiesis. Participates in cell differentiation regulation by repressing tissue-specific exons. Promotes Fas exon 6 skipping. Binds RNA, preferentially to both poly(G) and poly(U). The polypeptide is Polypyrimidine tract-binding protein 3 (Ptbp3) (Rattus norvegicus (Rat)).